Here is a 282-residue protein sequence, read N- to C-terminus: 2-dehydro-3-deoxyphosphooctonate aldolase (282 aa).

It belongs to the KdsA family.

The protein resides in the cytoplasm. It catalyses the reaction D-arabinose 5-phosphate + phosphoenolpyruvate + H2O = 3-deoxy-alpha-D-manno-2-octulosonate-8-phosphate + phosphate. It functions in the pathway carbohydrate biosynthesis; 3-deoxy-D-manno-octulosonate biosynthesis; 3-deoxy-D-manno-octulosonate from D-ribulose 5-phosphate: step 2/3. The protein operates within bacterial outer membrane biogenesis; lipopolysaccharide biosynthesis. The chain is 2-dehydro-3-deoxyphosphooctonate aldolase from Shewanella piezotolerans (strain WP3 / JCM 13877).